We begin with the raw amino-acid sequence, 905 residues long: Translation initiation factor IF-2 (905 aa).

Disordered stretches follow at residues 52–84 (QSHGQKEKRRISLKSKTTSTARVTGSSGKSKSV), 116–230 (AKKR…QKKT), and 269–318 (FEKE…FEKP). Positions 65–84 (KSKTTSTARVTGSSGKSKSV) are enriched in polar residues. Over residues 116–138 (AKKRAEEEAKKREQVKKEAEERQ) the composition is skewed to basic and acidic residues. Over residues 165 to 178 (VVVKKGSKAAAAAK) the composition is skewed to low complexity. 2 stretches are compositionally biased toward basic and acidic residues: residues 190–230 (PKVE…QKKT) and 269–278 (FEKERREIKR). The tr-type G domain maps to 406–575 (TRPPVVTIMG…NLQAELMELE (170 aa)). Positions 415 to 422 (GHVDHGKT) are G1. 415 to 422 (GHVDHGKT) serves as a coordination point for GTP. The interval 440-444 (GITQH) is G2. Residues 461–464 (DTPG) are G3. GTP-binding positions include 461-465 (DTPGH) and 515-518 (NKMD). Residues 515–518 (NKMD) form a G4 region. The tract at residues 551 to 553 (SAK) is G5.

It belongs to the TRAFAC class translation factor GTPase superfamily. Classic translation factor GTPase family. IF-2 subfamily.

Its subcellular location is the cytoplasm. Functionally, one of the essential components for the initiation of protein synthesis. Protects formylmethionyl-tRNA from spontaneous hydrolysis and promotes its binding to the 30S ribosomal subunits. Also involved in the hydrolysis of GTP during the formation of the 70S ribosomal complex. This Psychrobacter sp. (strain PRwf-1) protein is Translation initiation factor IF-2.